A 140-amino-acid chain; its full sequence is Coiled-coil domain-containing protein 126 (140 aa).

A signal peptide spans methionine 1–glycine 26. Residues asparagine 110 and asparagine 134 are each glycosylated (N-linked (GlcNAc...) asparagine). The segment at threonine 120–arginine 140 is disordered.

It localises to the secreted. The sequence is that of Coiled-coil domain-containing protein 126 (CCDC126) from Homo sapiens (Human).